We begin with the raw amino-acid sequence, 56 residues long: PI-stichotoxin-Hcr2o (56 aa).

Residues 4–54 (CLEPKVVGPCKARIRRFYFDSETGKCTPFIYGGCGGNGNNFETLHACRAIC) form the BPTI/Kunitz inhibitor domain. Intrachain disulfides connect Cys4-Cys54, Cys13-Cys37, and Cys29-Cys50.

It belongs to the venom Kunitz-type family. Sea anemone type 2 potassium channel toxin subfamily.

Its subcellular location is the secreted. The protein localises to the nematocyst. This recombinant serine protease inhibitor inhibits both trypsin (Ki=21 nM) and chymotrypsin (Ki=500 nM). It possesses anti-inflammatory activity in vitro. It inhibits macrophage LPS-induced nitric oxide synthesis, and blocks histamine influence on intracellular calcium concentration in murine bone marrow-derived macrophages, which can indicate inhibition of H1-histamine receptor (HRH1). In vitro, it shows cytoprotective activity in the oxidative stress agent 6-hydroxydopamine (6-OHDA)-induced neurotoxicity model. In this model, it decreases reactive oxygen species (ROS) levels, and increases cell viability in a correlated manner. It is possible that the observed effect is due to the ability of this peptides to act as free-radical scavenger. In vivo, it shows analgesic activity, since it increases hot plate and tail flick withdrawal latencies, when using a mice thermal pain stimulation model. This is PI-stichotoxin-Hcr2o from Radianthus crispa (Leathery sea anemone).